Reading from the N-terminus, the 127-residue chain is Large ribosomal subunit protein eL8 (127 aa).

The protein belongs to the eukaryotic ribosomal protein eL8 family. As to quaternary structure, part of the 50S ribosomal subunit. Probably part of the RNase P complex.

The protein localises to the cytoplasm. Its function is as follows. Multifunctional RNA-binding protein that recognizes the K-turn motif in ribosomal RNA, the RNA component of RNase P, box H/ACA, box C/D and box C'/D' sRNAs. This is Large ribosomal subunit protein eL8 from Picrophilus torridus (strain ATCC 700027 / DSM 9790 / JCM 10055 / NBRC 100828 / KAW 2/3).